The primary structure comprises 264 residues: Thymidylate synthase (264 aa).

R21 serves as a coordination point for dUMP. H51 provides a ligand contact to (6R)-5,10-methylene-5,6,7,8-tetrahydrofolate. DUMP is bound at residue 126 to 127 (RR). C146 serves as the catalytic Nucleophile. DUMP is bound by residues 166–169 (RSAD), N177, and 207–209 (HLY). Residue D169 participates in (6R)-5,10-methylene-5,6,7,8-tetrahydrofolate binding. Residue A263 coordinates (6R)-5,10-methylene-5,6,7,8-tetrahydrofolate.

The protein belongs to the thymidylate synthase family. Bacterial-type ThyA subfamily. Homodimer.

The protein resides in the cytoplasm. The enzyme catalyses dUMP + (6R)-5,10-methylene-5,6,7,8-tetrahydrofolate = 7,8-dihydrofolate + dTMP. Its pathway is pyrimidine metabolism; dTTP biosynthesis. Functionally, catalyzes the reductive methylation of 2'-deoxyuridine-5'-monophosphate (dUMP) to 2'-deoxythymidine-5'-monophosphate (dTMP) while utilizing 5,10-methylenetetrahydrofolate (mTHF) as the methyl donor and reductant in the reaction, yielding dihydrofolate (DHF) as a by-product. This enzymatic reaction provides an intracellular de novo source of dTMP, an essential precursor for DNA biosynthesis. The chain is Thymidylate synthase from Legionella pneumophila (strain Corby).